The following is a 792-amino-acid chain: Glucocorticoid receptor (792 aa).

Residues 1-15 are compositionally biased toward basic and acidic residues; that stretch reads MDSKESLAPPGRDEV. Residues 1-25 form a disordered region; the sequence is MDSKESLAPPGRDEVPSSLLGRGRG. Residues 1-436 form a modulating region; that stretch reads MDSKESLAPP…STATGPPPKL (436 aa). Arginine 24 bears the Omega-N-methylarginine mark. Serine 46 carries the phosphoserine modification. Residues 67-98 are disordered; it reads SKGSASNAQQQQQQQQQQQQQQQQQPQPDLSK. The span at 75–94 shows a compositional bias: low complexity; the sequence is QQQQQQQQQQQQQQQQQPQP. Phosphoserine occurs at positions 131, 152, and 159. Over residues 148 to 162 the composition is skewed to polar residues; sequence NRSTSRPENPKSSTP. The segment at 148–201 is disordered; sequence NRSTSRPENPKSSTPAAGCATPTEKEFPQTHSDPSSEQQNRKSQPGTNGGSVKL. Threonine 168 is modified (phosphothreonine). A compositionally biased stretch (polar residues) spans 176-193; the sequence is QTHSDPSSEQQNRKSQPG. Phosphoserine is present on residues serine 221, serine 229, serine 243, and serine 284. Residues lysine 294 and lysine 310 each participate in a glycyl lysine isopeptide (Lys-Gly) (interchain with G-Cter in SUMO); alternate cross-link. Residues lysine 294 and lysine 310 each participate in a glycyl lysine isopeptide (Lys-Gly) (interchain with G-Cter in SUMO2); alternate cross-link. Residues serine 324 and serine 421 each carry the phosphoserine modification. Residues 434-509 constitute a DNA-binding region (nuclear receptor); sequence PKLCLVCSDE…AGMNLEARKT (76 aa). Lysine 435 participates in a covalent cross-link: Glycyl lysine isopeptide (Lys-Gly) (interchain with G-Cter in ubiquitin). 2 consecutive NR C4-type zinc fingers follow at residues 437–457 and 473–497; these read CLVCSDEASGCHYGVLTCGSC and CAGRNDCIIDKIRRKNCPACRYRKC. N6-acetyllysine is present on residues lysine 496, lysine 508, lysine 510, and lysine 511. The tract at residues 501–792 is interaction with CLOCK; it reads GMNLEARKTK…NIKKLLFHQK (292 aa). A hinge region spans residues 503-538; the sequence is NLEARKTKKKIKGIQQATAGVSQDTSENANKTIVPA. One can recognise an NR LBD domain in the interval 539–773; the sequence is ALPQLTPTLV…FPEMLAEIIT (235 aa). The interaction with CRY1 stretch occupies residues 547-712; it reads LVSLLEVIEP…EIRMTYIKEL (166 aa). Residue lysine 718 forms a Glycyl lysine isopeptide (Lys-Gly) (interchain with G-Cter in SUMO) linkage.

It belongs to the nuclear hormone receptor family. NR3 subfamily. As to quaternary structure, heteromultimeric cytoplasmic complex with HSP90AA1, HSPA1A/HSPA1B, and FKBP5 or another immunophilin such as PPID, STIP1, or the immunophilin homolog PPP5C. Upon ligand binding FKBP5 dissociates from the complex and FKBP4 takes its place, thereby linking the complex to dynein and mediating transport to the nucleus, where the complex dissociates. Probably forms a complex composed of chaperones HSP90 and HSP70, co-chaperones CDC37, PPP5C, TSC1 and client protein TSC2, CDK4, AKT, RAF1 and NR3C1; this complex does not contain co-chaperones STIP1/HOP and PTGES3/p23. Directly interacts with UNC45A. Binds to DNA as a homodimer, and as heterodimer with NR3C2 or the retinoid X receptor. Binds STAT5A and STAT5B homodimers and heterodimers. Interacts with NRIP1, POU2F1, POU2F2 and TRIM28. Interacts with several coactivator complexes, including the SMARCA4 complex, CREBBP/EP300, TADA2L (Ada complex) and p160 coactivators such as NCOA2 and NCOA6. Interaction with BAG1 inhibits transactivation. Interacts with HEXIM1 and TGFB1I1. Interacts with NCOA1. Interacts with NCOA3, SMARCA4, SMARCC1, SMARCD1, and SMARCE1. Interacts with CLOCK, CRY1 and CRY2 in a ligand-dependent fashion. Interacts with CIART. Interacts with RWDD3. Interacts with UBE2I/UBC9 and this interaction is enhanced in the presence of RWDD3. Interacts with GRIP1. Interacts with NR4A3 (via nuclear receptor DNA-binding domain), represses transcription activity of NR4A3 on the POMC promoter Nur response element (NurRE). Directly interacts with PNRC2 to attract and form a complex with UPF1 and DCP1A; the interaction leads to rapid mRNA degradation. Interacts with GSK3B. Interacts with FNIP1 and FNIP2. Interacts (via C-terminus) with HNRNPU (via C-terminus). Interacts with MCM3AP. Interacts (via domain NR LBD) with HSP90AA1 and HSP90AB1. In the absence of hormonal ligand, interacts with TACC1. Interacts (via NR LBD domain) with ZNF764 (via KRAB domain); the interaction regulates transcription factor activity of NR3C1 by directing its actions toward certain biologic pathways. Acetylation by CLOCK reduces its binding to glucocorticoid response elements and its transcriptional activity. Post-translationally, increased proteasome-mediated degradation in response to glucocorticoids. In terms of processing, phosphorylated in the absence of hormone; becomes hyperphosphorylated in the presence of glucocorticoids. Phosphorylated in the absence of hormone; becomes hyperphosphorylated in the presence of glucocorticoid. The Ser-221, Ser-243 and Ser-421-phosphorylated forms are mainly cytoplasmic, and the Ser-229-phosphorylated form is nuclear. Phosphorylation at Ser-229 increases transcriptional activity. Phosphorylation at Ser-221, Ser-243 and Ser-421 decreases signaling capacity. Phosphorylation at Ser-421 may protect from glucocorticoid-induced apoptosis. Phosphorylation at Ser-221 and Ser-229 is not required in regulation of chromosome segregation. May be dephosphorylated by PPP5C, attenuates NR3C1 action. Sumoylation at Lys-294 and Lys-310 negatively regulates its transcriptional activity. Sumoylation at Lys-718 positively regulates its transcriptional activity in the presence of RWDD3. Sumoylation at Lys-294 and Lys-310 is dispensable whereas sumoylation at Lys-718 is critical for the stimulatory effect of RWDD3 on its transcriptional activity. Heat shock increases sumoylation in a RWDD3-dependent manner. Post-translationally, ubiquitinated. Ubiquitination by UBR5 leads to its degradation: UBR5 specifically recognizes and binds ligand-bound NR3C1 when it is not associated with coactivators (NCOAs). In presence of NCOAs, the UBR5-degron is not accessible, preventing its ubiquitination and degradation. In terms of tissue distribution, expressed in spleen, kidney and liver. Expressed in a circadian manner in the liver. As to expression, expressed at highest level in spleen with lesser amounts in kidney and liver.

The protein localises to the cytoplasm. The protein resides in the nucleus. It localises to the mitochondrion. Its subcellular location is the cytoskeleton. It is found in the spindle. The protein localises to the microtubule organizing center. The protein resides in the centrosome. It localises to the chromosome. Its subcellular location is the nucleoplasm. In terms of biological role, receptor for glucocorticoids (GC). Has a dual mode of action: as a transcription factor that binds to glucocorticoid response elements (GRE), both for nuclear and mitochondrial DNA, and as a modulator of other transcription factors. Affects inflammatory responses, cellular proliferation and differentiation in target tissues. Involved in chromatin remodeling. Plays a role in rapid mRNA degradation by binding to the 5' UTR of target mRNAs and interacting with PNRC2 in a ligand-dependent manner which recruits the RNA helicase UPF1 and the mRNA-decapping enzyme DCP1A, leading to RNA decay. Could act as a coactivator for STAT5-dependent transcription upon growth hormone (GH) stimulation and could reveal an essential role of hepatic GR in the control of body growth. Its function is as follows. Has transcriptional activation and repression activity. Mediates glucocorticoid-induced apoptosis. Promotes accurate chromosome segregation during mitosis. May act as a tumor suppressor. May play a negative role in adipogenesis through the regulation of lipolytic and antilipogenic gene expression. Functionally, acts as a dominant negative inhibitor of isoform 1. Has intrinsic transcriptional activity independent of isoform Alpha when both isoforms are coexpressed. Loses this transcription modulator function on its own. Has no hormone-binding activity. May play a role in controlling glucose metabolism by maintaining insulin sensitivity. Reduces hepatic gluconeogenesis through down-regulation of PEPCK in an isoform Alpha-dependent manner. Directly regulates STAT1 expression in isoform Alpha-independent manner. In Mus musculus (Mouse), this protein is Glucocorticoid receptor (Nr3c1).